We begin with the raw amino-acid sequence, 403 residues long: Arginine deiminase (403 aa).

C388 serves as the catalytic Amidino-cysteine intermediate.

The protein belongs to the arginine deiminase family.

Its subcellular location is the cytoplasm. The catalysed reaction is L-arginine + H2O = L-citrulline + NH4(+). The protein operates within amino-acid degradation; L-arginine degradation via ADI pathway; carbamoyl phosphate from L-arginine: step 1/2. The chain is Arginine deiminase from Mycoplasma capricolum subsp. capricolum (strain California kid / ATCC 27343 / NCTC 10154).